The following is a 925-amino-acid chain: Nonribosomal peptide synthetase apvA (925 aa).

Positions 15–436 (AREDSGHVVV…TGRAKENMII (422 aa)) are adenylation (A) domain. The Carrier domain occupies 564 to 644 (EPQNDLEKTL…DLATALEKLQ (81 aa)). Ser601 carries the post-translational modification O-(pantetheine 4'-phosphoryl)serine. A thioesterase (TE) domain region spans residues 663-909 (PLWLVHPGAG…HYSMIGPDHV (247 aa)).

This sequence belongs to the NRP synthetase family. As to expression, apvA specifically produces aspulvinone E in hyphea, in contrast to melA which produces aspulvinone E in conidia where it is converted to UV-protective Asp-melanin.

It carries out the reaction 2 3-(4-hydroxyphenyl)pyruvate + AH2 + 2 ATP + O2 = aspulvinone E + A + 2 AMP + CO2 + 2 diphosphate + H2O + H(+). It participates in secondary metabolite biosynthesis. Its function is as follows. Nonribosomal peptide synthetase; part of the gene cluster that mediates the biosynthesis of aspulvinones. The nonribosomal peptide synthetase apvA is responsible for the production of aspulvinone E, the core structure of aspulvinones. ApvA first activates 4-hydroxyphenylpyruvate (HPPA) through its A domain to AMP-HPPA. The HPPA unit is then loaded to the T domain and eventually transferred to the TE domain. Upon loading of another HPPA unit to the T domain, the TE domain promotes the enolate formation on the unit attached. The next step involves head to tail Claisen condensation, followed by the keto-enol tautermerization and a nucleophilic attack on the carbonyl carbon to yield the furanone partial structure. A spontaneous oxidation at the beta-carbon of the thioester might occur in aerobic condition. The TE domain then catalyzes the hydrolysis of the thioester, followed by spontaneous decarboxylation, dehydroxylation and keto-enol tautermerization to give the aspulvinone core. Aspulvinone E is highly unstable and converted to isoaspulvinone E in the presence of light. The structural diversity of the aspulvinones suggests that other tailoring enzymes are involved and have still to be identified. This chain is Nonribosomal peptide synthetase apvA, found in Aspergillus terreus (strain NIH 2624 / FGSC A1156).